The following is a 417-amino-acid chain: Serine--tRNA ligase (417 aa).

Residue 225-227 (TLE) coordinates L-serine. An ATP-binding site is contributed by 256–258 (RQE). Glu279 is a binding site for L-serine. ATP is bound at residue 343–346 (EVSS). Thr379 contributes to the L-serine binding site.

Belongs to the class-II aminoacyl-tRNA synthetase family. Type-1 seryl-tRNA synthetase subfamily. In terms of assembly, homodimer. The tRNA molecule binds across the dimer.

Its subcellular location is the cytoplasm. The enzyme catalyses tRNA(Ser) + L-serine + ATP = L-seryl-tRNA(Ser) + AMP + diphosphate + H(+). It catalyses the reaction tRNA(Sec) + L-serine + ATP = L-seryl-tRNA(Sec) + AMP + diphosphate + H(+). The protein operates within aminoacyl-tRNA biosynthesis; selenocysteinyl-tRNA(Sec) biosynthesis; L-seryl-tRNA(Sec) from L-serine and tRNA(Sec): step 1/1. Functionally, catalyzes the attachment of serine to tRNA(Ser). Is also able to aminoacylate tRNA(Sec) with serine, to form the misacylated tRNA L-seryl-tRNA(Sec), which will be further converted into selenocysteinyl-tRNA(Sec). The polypeptide is Serine--tRNA ligase (Mycoplasma genitalium (strain ATCC 33530 / DSM 19775 / NCTC 10195 / G37) (Mycoplasmoides genitalium)).